Reading from the N-terminus, the 265-residue chain is Mlc titration factor A (265 aa).

Positions 111, 148, 152, and 211 each coordinate Zn(2+).

This sequence belongs to the MtfA family. As to quaternary structure, interacts with Mlc. Zn(2+) is required as a cofactor.

It is found in the cytoplasm. Involved in the modulation of the activity of the glucose-phosphotransferase system (glucose-PTS). Interacts with the transcriptional repressor Mlc, preventing its interaction with DNA and leading to the modulation of expression of genes regulated by Mlc, including ptsG, which encodes the PTS system glucose-specific EIICB component. In terms of biological role, shows zinc-dependent metallopeptidase activity. The polypeptide is Mlc titration factor A (Salmonella paratyphi A (strain AKU_12601)).